We begin with the raw amino-acid sequence, 691 residues long: MTDAISPLTSKDIDTAKPITNDDAIVTQMRTFIDTLKQHNYAYYVLDNPILEDSEYDQLRRSLLELEEEYPDLVQPDSPINQVGDMPLPAFTQVTHDIPMLSLGNVFEYNDLRDFMRRVNDRLSVAQQSPEYEMELKLDGLAVSLKYVHGKFTQAVTRGDGQTGEDITQNAKTIRNMPLWLADAADIELLEVRGEVLMPKAGFERLNRLAAEKEEKTFANPRNAAAGSLRQLDPSVAASRPLAFYAYSVNQGLLDTIDTQSAALAWIKDIGFSVSAVEVVSNPREAQTYYESIIATRADLPFEIDGMVIKVNSLALQQQLGFLSREPRWATAYKFPAETVMTRLHAIDWQVGRTGQITPVGKLEPVKVGGVTVSNVTLHNFGEIQRLDVRAGDMVSVHRAGDVIPKVTRVWHEQRPENSEPVQLPSTCPVCDSPVVLPKDEALARCTGGLFCPAQQQEALIHFVSRRAMDIDGLGASWLISFFEHGLVKTVADIYQLHNHQEELVTLEKLGEKSVQNIISAIEASKHTTLSRFIYALGIRGVGETTAQNLAQQFGDLDALMSASIEKLLLTPDVGAITAELAYKFFRAPHNIEVITALREAGVHWDKVEQVVSEGLPLDGQTWVITGALDSMARDEAKAKLQALGAKVSGSISAKTTALLAGDKAGSKMAKAEKLGVKVVGEEEFLALVGE.

Residues 53–57 (DSEYD), 102–103 (SL), and Glu-135 contribute to the NAD(+) site. Residue Lys-137 is the N6-AMP-lysine intermediate of the active site. 4 residues coordinate NAD(+): Arg-158, Glu-195, Lys-310, and Lys-334. 4 residues coordinate Zn(2+): Cys-428, Cys-431, Cys-446, and Cys-452. The 79-residue stretch at 613–691 (SEGLPLDGQT…EEEFLALVGE (79 aa)) folds into the BRCT domain.

It belongs to the NAD-dependent DNA ligase family. LigA subfamily. Mg(2+) serves as cofactor. It depends on Mn(2+) as a cofactor.

The catalysed reaction is NAD(+) + (deoxyribonucleotide)n-3'-hydroxyl + 5'-phospho-(deoxyribonucleotide)m = (deoxyribonucleotide)n+m + AMP + beta-nicotinamide D-nucleotide.. DNA ligase that catalyzes the formation of phosphodiester linkages between 5'-phosphoryl and 3'-hydroxyl groups in double-stranded DNA using NAD as a coenzyme and as the energy source for the reaction. It is essential for DNA replication and repair of damaged DNA. This chain is DNA ligase, found in Psychrobacter arcticus (strain DSM 17307 / VKM B-2377 / 273-4).